The sequence spans 771 residues: DNA helicase/primase complex-associated protein (771 aa).

This sequence belongs to the herpesviridae HEPA family. As to quaternary structure, associates with the primase and the helicase to form the helicase-primase complex. Interacts with the origin-binding protein. Interacts with the polymerase catalytic subunit.

Its subcellular location is the host nucleus. In terms of biological role, component of the helicase/primase complex. Unwinds the DNA at the replication forks and generates single-stranded DNA for both leading and lagging strand synthesis. The primase synthesizes short RNA primers on the lagging strand that the polymerase presumably elongates using dNTPs. The primase-associated factor has no known catalytic activity in the complex and may serve to facilitate the formation of the replisome by directly interacting with the origin-binding protein and the polymerase. The sequence is that of DNA helicase/primase complex-associated protein from Homo sapiens (Human).